The primary structure comprises 460 residues: Antizyme inhibitor 2 (460 aa).

The necessary for polyamine uptake stimulation stretch occupies residues 117–140; that stretch reads QIAQIKYAAKHGIQLLSFDNEMEL.

It belongs to the Orn/Lys/Arg decarboxylase class-II family. ODC antizyme inhibitor subfamily. Monomer. Interacts with OAZ1, OAZ2 and OAZ3; this interaction disrupts the interaction between the antizyme and ODC1. Does not form a heterodimer with ODC1. Ubiquitinated, leading to its proteasomal degradation; a process that is reduced in presence of antizymes. May also be degraded through the lysosomal degradative pathway in a proteasomal-independent manner. As to expression, expressed in the neocortex, thalamus, hippocampus, cerebellum, medulla oblongata, gray and white matter. Expressed in neurons, oligodendrocytes, basket, Purkinje and pyramidal cells. Expressed in spermatocytes and Leydig cells of the testis. Expressed in luteal theca cells lining corpus luteum cysts and in hilus cells of the ovary. Expressed in primary and neoplastic mast cells (MC) (at protein level). Highly expressed in brain. Also expressed in testis.

It localises to the nucleus. The protein resides in the cytoplasm. The protein localises to the perinuclear region. Its subcellular location is the membrane. It is found in the cytoplasmic vesicle. It localises to the endoplasmic reticulum-Golgi intermediate compartment. The protein resides in the golgi apparatus. The protein localises to the cis-Golgi network. Its subcellular location is the trans-Golgi network. It is found in the cytoplasmic granule. It localises to the cell projection. The protein resides in the axon. The protein localises to the dendrite. Its subcellular location is the perikaryon. Its function is as follows. Antizyme inhibitor (AZI) protein that positively regulates ornithine decarboxylase (ODC) activity and polyamine uptake. AZI is an enzymatically inactive ODC homolog that counteracts the negative effect of ODC antizymes (AZs) OAZ1, OAZ2 and OAZ3 on ODC activity by competing with ODC for antizyme-binding. Inhibits antizyme-dependent ODC degradation and releases ODC monomers from their inactive complex with antizymes, leading to formation of the catalytically active ODC homodimer and restoring polyamine production. Participates in the morphological integrity of the trans-Golgi network (TGN) and functions as a regulator of intracellular secretory vesicle trafficking. In Homo sapiens (Human), this protein is Antizyme inhibitor 2 (AZIN2).